The primary structure comprises 85 residues: Cell division topological specificity factor (85 aa).

It belongs to the MinE family.

Prevents the cell division inhibition by proteins MinC and MinD at internal division sites while permitting inhibition at polar sites. This ensures cell division at the proper site by restricting the formation of a division septum at the midpoint of the long axis of the cell. The polypeptide is Cell division topological specificity factor (Xanthomonas campestris pv. campestris (strain 8004)).